Here is a 381-residue protein sequence, read N- to C-terminus: L-lactate dehydrogenase (381 aa).

Residues 1–380 enclose the FMN hydroxy acid dehydrogenase domain; sequence MIISASTDYR…SADSLVRELG (380 aa). Tyr24 is a substrate binding site. Residues Ser106 and Gln127 each coordinate FMN. Substrate is bound at residue Tyr129. Thr155 is a binding site for FMN. Residue Arg164 coordinates substrate. Lys251 serves as a coordination point for FMN. Catalysis depends on His275, which acts as the Proton acceptor. Arg278 provides a ligand contact to substrate. Residue 306-330 participates in FMN binding; the sequence is DSGIRTGLDVVRMIALGADSVLLGR.

Belongs to the FMN-dependent alpha-hydroxy acid dehydrogenase family. As to quaternary structure, homotetramer. It depends on FMN as a cofactor.

It localises to the cell inner membrane. The enzyme catalyses (S)-lactate + A = pyruvate + AH2. Functionally, catalyzes the conversion of L-lactate to pyruvate. Is coupled to the respiratory chain. The polypeptide is L-lactate dehydrogenase (Pseudomonas aeruginosa (strain UCBPP-PA14)).